The chain runs to 317 residues: MSSKTALLLLQMGGPDSLDAVHPFLMNLFTDRDIIKIGPAFLQPFIARRIVNKRAPKVEEYYRQIGGKSPIRELTEAQGEGLQQLLGEDFRSFVAMRYSRPSTIDALAAIKRAGIERVIALSLYPHYSKATTGSSLNELKRVLKESGAKFEISYIDRFYNHPLYIKALSEKVVQGLASFPDRKDVEIVFSAHSLPQSFIEEGDPYLDHIQETVRLVMEQVGEGSHTLCFQSKASRVKWLEPSTEATIEQMAKAGKKNLLMVPLSFVSDHIETLYEIDIQYGEEAKALGIERFVRSESLNSSPLFLECLADLVKTAAK.

Residues H192 and E271 each contribute to the Fe cation site.

It belongs to the ferrochelatase family.

The protein localises to the cytoplasm. It catalyses the reaction heme b + 2 H(+) = protoporphyrin IX + Fe(2+). The protein operates within porphyrin-containing compound metabolism; protoheme biosynthesis; protoheme from protoporphyrin-IX: step 1/1. Its function is as follows. Catalyzes the ferrous insertion into protoporphyrin IX. This chain is Ferrochelatase, found in Citrifermentans bemidjiense (strain ATCC BAA-1014 / DSM 16622 / JCM 12645 / Bem) (Geobacter bemidjiensis).